Consider the following 308-residue polypeptide: MNTKLNVKGYLNVGDNHQLYYWTQGNPNGKPVLYIHGGPGSGTDEGCLKYFDLETTWIILLDQRGCGKSKTNDIFYENNTDKLVSDFEILRQKLNIKNWTLFGGSWGSALALVYAIKHPQVVDKIFLRALFLAREKDWSEALMGLGKMFYPYEHQRFMDSIPKAYQNSYEQIVNYCYDQFQNGDESTKEKLAKAWVDWESTLLSPINKIHSTATDFKLVEKLALLECHYAVNKSFLDENFILDNISVLKNKSIYLAHGRFDLICPLYQPLALKQAFPELQLYVTNNAGHSGSDANNLATIKHLLKTYL.

The AB hydrolase-1 domain occupies 30–290 (KPVLYIHGGP…LYVTNNAGHS (261 aa)). The Nucleophile role is filled by Ser-105. Asp-261 is an active-site residue. His-289 (proton donor) is an active-site residue.

This sequence belongs to the peptidase S33 family.

It is found in the cytoplasm. The catalysed reaction is Release of N-terminal proline from a peptide.. Specifically catalyzes the removal of N-terminal proline residues from peptides. This chain is Putative proline iminopeptidase (pip), found in Mycoplasma genitalium (strain ATCC 33530 / DSM 19775 / NCTC 10195 / G37) (Mycoplasmoides genitalium).